A 766-amino-acid chain; its full sequence is Ubiquitin carboxyl-terminal hydrolase creB (766 aa).

Positions Met-1–Pro-32 are disordered. Over residues Gly-13–Pro-23 the composition is skewed to low complexity. Residues Tyr-55–Thr-466 enclose the USP domain. Residue Cys-64 is the Nucleophile of the active site. Disordered stretches follow at residues Glu-115–Pro-145 and Glu-243–Pro-266. Low complexity predominate over residues Ser-249–Ser-263. His-417 functions as the Proton acceptor in the catalytic mechanism. A disordered region spans residues Ala-526 to Arg-752. A compositionally biased stretch (pro residues) spans Ser-548–Pro-572. The stretch at Leu-573–Asp-620 forms a coiled coil. Basic and acidic residues-rich tracts occupy residues Arg-576–Ala-643 and Glu-734–Ser-747.

Belongs to the peptidase C19 family. Interacts with creA, creC and qutD.

It catalyses the reaction Thiol-dependent hydrolysis of ester, thioester, amide, peptide and isopeptide bonds formed by the C-terminal Gly of ubiquitin (a 76-residue protein attached to proteins as an intracellular targeting signal).. Its function is as follows. Ubiquitin thioesterase component of the regulatory network controlling carbon source utilization through ubiquitination and deubiquitination involving creA, creB, creC, creD and acrB. Deubiquitinates the creA catabolic repressor and the quinate permease qutD. Also plays a role in response to carbon starvation and the control of extracellular proteases activity. This chain is Ubiquitin carboxyl-terminal hydrolase creB (creB), found in Emericella nidulans (strain FGSC A4 / ATCC 38163 / CBS 112.46 / NRRL 194 / M139) (Aspergillus nidulans).